Consider the following 220-residue polypeptide: Small ribosomal subunit protein uS2 (220 aa).

This sequence belongs to the universal ribosomal protein uS2 family.

The polypeptide is Small ribosomal subunit protein uS2 (Methanococcus maripaludis (strain C5 / ATCC BAA-1333)).